The following is a 443-amino-acid chain: Ribulose bisphosphate carboxylase large chain (443 aa).

An N6,N6,N6-trimethyllysine modification is found at Lys7. Asn116 and Thr166 together coordinate substrate. The Proton acceptor role is filled by Lys168. Position 170 (Lys170) interacts with substrate. Mg(2+)-binding residues include Lys194, Asp196, and Glu197. Lys194 carries the N6-carboxylysine modification. His287 (proton acceptor) is an active-site residue. Residues Arg288, His320, and Ser372 each contribute to the substrate site.

Belongs to the RuBisCO large chain family. Type I subfamily. As to quaternary structure, heterohexadecamer of 8 large chains and 8 small chains; disulfide-linked. The disulfide link is formed within the large subunit homodimers. Requires Mg(2+) as cofactor. In terms of processing, the disulfide bond which can form in the large chain dimeric partners within the hexadecamer appears to be associated with oxidative stress and protein turnover.

The protein localises to the plastid. It localises to the chloroplast. It carries out the reaction 2 (2R)-3-phosphoglycerate + 2 H(+) = D-ribulose 1,5-bisphosphate + CO2 + H2O. It catalyses the reaction D-ribulose 1,5-bisphosphate + O2 = 2-phosphoglycolate + (2R)-3-phosphoglycerate + 2 H(+). In terms of biological role, ruBisCO catalyzes two reactions: the carboxylation of D-ribulose 1,5-bisphosphate, the primary event in carbon dioxide fixation, as well as the oxidative fragmentation of the pentose substrate in the photorespiration process. Both reactions occur simultaneously and in competition at the same active site. In Abies sachalinensis (Sakhalin fir), this protein is Ribulose bisphosphate carboxylase large chain.